The chain runs to 144 residues: Mediator of RNA polymerase II transcription subunit 21 (144 aa).

This sequence belongs to the Mediator complex subunit 21 family. In terms of assembly, interacts with PPARG. Component of the Mediator complex, which is composed of MED1, MED4, MED6, MED7, MED8, MED9, MED10, MED11, MED12, MED13, MED13L, MED14, MED15, MED16, MED17, MED18, MED19, MED20, MED21, MED22, MED23, MED24, MED25, MED26, MED27, MED29, MED30, MED31, CCNC, CDK8 and CDC2L6/CDK11. The MED12, MED13, CCNC and CDK8 subunits form a distinct module termed the CDK8 module. Mediator containing the CDK8 module is less active than Mediator lacking this module in supporting transcriptional activation. Individual preparations of the Mediator complex lacking one or more distinct subunits have been variously termed ARC, CRSP, DRIP, PC2, SMCC and TRAP. Interacts with THRA in a ligand-dependent fashion.

Its subcellular location is the nucleus. Functionally, component of the Mediator complex, a coactivator involved in the regulated transcription of nearly all RNA polymerase II-dependent genes. Mediator functions as a bridge to convey information from gene-specific regulatory proteins to the basal RNA polymerase II transcription machinery. Mediator is recruited to promoters by direct interactions with regulatory proteins and serves as a scaffold for the assembly of a functional preinitiation complex with RNA polymerase II and the general transcription factors. This is Mediator of RNA polymerase II transcription subunit 21 (MED21) from Homo sapiens (Human).